An 870-amino-acid polypeptide reads, in one-letter code: Probable coatomer subunit gamma (870 aa).

HEAT repeat units follow at residues 60 to 97 (TEAT…VSDD), 99 to 133 (IIVT…TGML), 168 to 205 (EVVR…NDRL), 278 to 315 (SEIQ…AHPN), 316 to 350 (AVMS…GAES), and 389 to 425 (HTVM…ENPD).

It belongs to the COPG family. Oligomeric complex that consists of at least the alpha, beta, beta', gamma, delta, epsilon and zeta subunits.

It is found in the cytoplasm. Its subcellular location is the golgi apparatus membrane. It localises to the cytoplasmic vesicle. The protein resides in the COPI-coated vesicle membrane. The coatomer is a cytosolic protein complex that binds to dilysine motifs and reversibly associates with Golgi non-clathrin-coated vesicles, which further mediate biosynthetic protein transport from the ER, via the Golgi up to the trans Golgi network. Coatomer complex is required for budding from Golgi membranes, and is essential for the retrograde Golgi-to-ER transport of dilysine-tagged proteins. In Caenorhabditis elegans, this protein is Probable coatomer subunit gamma.